A 759-amino-acid polypeptide reads, in one-letter code: Protein YdeP (759 aa).

[4Fe-4S] cluster contacts are provided by Cys49 and Cys52.

Belongs to the prokaryotic molybdopterin-containing oxidoreductase family. The cofactor is [4Fe-4S] cluster. Requires Mo-bis(molybdopterin guanine dinucleotide) as cofactor.

Functionally, probably involved in acid resistance. The polypeptide is Protein YdeP (ydeP) (Escherichia coli (strain K12)).